Reading from the N-terminus, the 1725-residue chain is Latrophilin Cirl (1725 aa).

The Extracellular segment spans residues 1–757 (MALNELGNCA…LFTMFDGNMR (757 aa)). The region spanning 18–107 (ACEGKQLTIE…KYLEAHYQCI (90 aa)) is the SUEL-type lectin domain. Asn135 is a glycosylation site (N-linked (GlcNAc...) asparagine). A disordered region spans residues 164–284 (AVQPTHSTPS…SAANNSVNIG (121 aa)). 2 stretches are compositionally biased toward low complexity: residues 167–176 (PTHSTPSSST) and 224–236 (SSSS…SAGN). N-linked (GlcNAc...) asparagine glycosylation is found at Asn236, Asn278, Asn326, Asn388, Asn645, Asn693, and Asn720. Polar residues predominate over residues 259 to 282 (LLTTKSSPNRTPGTTASAANNSVN). The tract at residues 361-390 (DDEYDDDLPAASSTTPQPSNNGGDCVHNSS) is disordered. Polar residues predominate over residues 371 to 390 (ASSTTPQPSNNGGDCVHNSS). Residues 551–744 (RNVVQKVKNI…AILMDVVDEH (194 aa)) enclose the GAIN-B domain. Cystine bridges form between Cys699-Cys726 and Cys714-Cys728. The tract at residues 699-744 (CVFWNYIDHAWSANGCSLESTNRTHSVCSCNHLTNFAILMDVVDEH) is GPS. A helical transmembrane segment spans residues 758 to 778 (IFIYISVAICVVFIIIALLTL). Over 779-791 (KLFNGVFVKSART) the chain is Cytoplasmic. The chain crosses the membrane as a helical span at residues 792 to 812 (SIYSSIYICLLAIELLFLLGI). Residues 813 to 818 (EQTETS) lie on the Extracellular side of the membrane. Residues 819-839 (IFCGFITVFLHCAILSGTAWF) traverse the membrane as a helical segment. Residues 840–865 (CYEAFHSYSTLTSDELLLEVDQTPKV) lie on the Cytoplasmic side of the membrane. Residues 866–886 (NCYYLLSYGLSLSVVAISLVI) traverse the membrane as a helical segment. The Extracellular segment spans residues 887 to 910 (DPSTYTQNDYCVLMEANALFYSTF). The chain crosses the membrane as a helical span at residues 911 to 931 (VAPVLIFFVAAITYTFLSWII). Residues 932-958 (MRRKSRTALKTKEHTRLANVRFDIRCS) are Cytoplasmic-facing. Residues 959–979 (FVFLLLLSVVWCCAYFYLRGA) form a helical membrane-spanning segment. Over 980-986 (KLDEDGA) the chain is Extracellular. A helical transmembrane segment spans residues 987–1007 (PIYGYCFICFNTLLGIYIFVF). Residues 1008 to 1725 (HCIQNEKIRR…VRCYLEPLAK (718 aa)) are Cytoplasmic-facing. Residues 1056–1088 (TANQSAGTLSKSKSKLPLGAGDEARDGDAQQQQ) are disordered. Ser1153 carries the phosphoserine modification. Disordered regions lie at residues 1236–1263 (HNNQ…LHSR), 1309–1337 (QQLQ…AEQH), 1472–1555 (GGGS…SDER), and 1636–1705 (LFGH…QARH). Residues 1237–1246 (NNQHGKKKRG) show a composition bias toward basic residues. Phosphoserine is present on residues Ser1255 and Ser1262. Positions 1309 to 1327 (QQLQQQQLRQQRQQQQQQL) are enriched in low complexity. Ser1328 and Ser1329 each carry phosphoserine. Residues 1478-1496 (GGSVTSRSQQQQQQQLKQK) show a composition bias toward low complexity. Acidic residues-rich tracts occupy residues 1505-1522 (DDDD…DEVT) and 1532-1543 (CDDEDNESDIDD). Over residues 1651-1666 (QTPAQKRQQLQKLSPQ) the composition is skewed to polar residues. The span at 1667–1683 (STTSSSSHTSHSNPQHA) shows a compositional bias: low complexity. Positions 1684-1693 (PAHHLQHHHT) are enriched in basic residues. Over residues 1694 to 1705 (QQQQQQQQQARH) the composition is skewed to low complexity.

Belongs to the G-protein coupled receptor 2 family. LN-TM7 subfamily. In terms of assembly, forms a heterodimer, consisting of a large extracellular region non-covalently linked to a seven-transmembrane moiety. In terms of processing, proteolytically cleaved into 2 subunits, an extracellular subunit and a seven-transmembrane subunit.

The protein localises to the cell membrane. The chain is Latrophilin Cirl from Drosophila mojavensis (Fruit fly).